Here is a 101-residue protein sequence, read N- to C-terminus: YCLTINTTICAGYCMTRDINGKLFLPKSALSQDVCTYRDFTYRTVEIPGCPHHVAPYFSYPVAMSCKCGKCNTDYSDCIHEAVKTNYCTKPQTFYLGGFSV.

Cystine bridges form between cysteine 2/cysteine 88, cysteine 10/cysteine 66, cysteine 14/cysteine 68, and cysteine 71/cysteine 78. An N-linked (GlcNAc...) asparagine glycan is attached at asparagine 6.

This sequence belongs to the glycoprotein hormones subunit beta family. In terms of assembly, heterodimer of a common alpha chain and a unique beta chain which confers biological specificity to thyrotropin, lutropin, follitropin and gonadotropin.

The protein resides in the secreted. Indispensable for the control of thyroid structure and metabolism. This chain is Thyrotropin subunit beta (TSHB), found in Phodopus sungorus (Striped hairy-footed hamster).